We begin with the raw amino-acid sequence, 598 residues long: Elongation factor 4 (598 aa).

Residues 4–186 (SRLRNFSIIA…EIVKKIPPPK (183 aa)) form the tr-type G domain. Residues 16–21 (DHGKST) and 133–136 (NKID) each bind GTP.

This sequence belongs to the TRAFAC class translation factor GTPase superfamily. Classic translation factor GTPase family. LepA subfamily.

It is found in the cell inner membrane. It carries out the reaction GTP + H2O = GDP + phosphate + H(+). In terms of biological role, required for accurate and efficient protein synthesis under certain stress conditions. May act as a fidelity factor of the translation reaction, by catalyzing a one-codon backward translocation of tRNAs on improperly translocated ribosomes. Back-translocation proceeds from a post-translocation (POST) complex to a pre-translocation (PRE) complex, thus giving elongation factor G a second chance to translocate the tRNAs correctly. Binds to ribosomes in a GTP-dependent manner. This is Elongation factor 4 from Pelobacter propionicus (strain DSM 2379 / NBRC 103807 / OttBd1).